Consider the following 233-residue polypeptide: Large ribosomal subunit protein uL3 (233 aa).

The tract at residues 146–171 is disordered; the sequence is GSQRASHGNSRSHRVPGSIGQAQDPG. N5-methylglutamine is present on Gln-168.

This sequence belongs to the universal ribosomal protein uL3 family. In terms of assembly, part of the 50S ribosomal subunit. Forms a cluster with proteins L14 and L19. Methylated by PrmB.

Functionally, one of the primary rRNA binding proteins, it binds directly near the 3'-end of the 23S rRNA, where it nucleates assembly of the 50S subunit. The protein is Large ribosomal subunit protein uL3 of Bordetella bronchiseptica (strain ATCC BAA-588 / NCTC 13252 / RB50) (Alcaligenes bronchisepticus).